Consider the following 235-residue polypeptide: NADH-quinone oxidoreductase subunit C (235 aa).

It belongs to the complex I 30 kDa subunit family. As to quaternary structure, NDH-1 is composed of 14 different subunits. Subunits NuoB, C, D, E, F, and G constitute the peripheral sector of the complex.

The protein resides in the cell membrane. The catalysed reaction is a quinone + NADH + 5 H(+)(in) = a quinol + NAD(+) + 4 H(+)(out). Functionally, NDH-1 shuttles electrons from NADH, via FMN and iron-sulfur (Fe-S) centers, to quinones in the respiratory chain. The immediate electron acceptor for the enzyme in this species is believed to be a menaquinone. Couples the redox reaction to proton translocation (for every two electrons transferred, four hydrogen ions are translocated across the cytoplasmic membrane), and thus conserves the redox energy in a proton gradient. The chain is NADH-quinone oxidoreductase subunit C from Mycobacterium avium (strain 104).